The chain runs to 487 residues: Dihydrofolate synthase/folylpolyglutamate synthase (487 aa).

44–46 (DPS) provides a ligand contact to 7,8-dihydropteroate. An ATP-binding site is contributed by 74 to 77 (GKTS). Residues Thr76 and Ser98 each coordinate Mg(2+). 150–153 (SKFE) serves as a coordination point for 7,8-dihydropteroate. Residue Glu174 coordinates Mg(2+). Residue 181–183 (WDA) coordinates 7,8-dihydropteroate. Residues His201 and Asp203 each coordinate Mg(2+). Residues Asn301, Arg338, and 351–354 (DAAH) each bind ATP. Asp384 is a Mg(2+) binding site.

The protein belongs to the folylpolyglutamate synthase family. Monomer. Requires Mg(2+) as cofactor.

It carries out the reaction 7,8-dihydropteroate + L-glutamate + ATP = 7,8-dihydrofolate + ADP + phosphate + H(+). The catalysed reaction is (6S)-5,6,7,8-tetrahydrofolyl-(gamma-L-Glu)(n) + L-glutamate + ATP = (6S)-5,6,7,8-tetrahydrofolyl-(gamma-L-Glu)(n+1) + ADP + phosphate + H(+). It participates in cofactor biosynthesis; tetrahydrofolate biosynthesis; 7,8-dihydrofolate from 2-amino-4-hydroxy-6-hydroxymethyl-7,8-dihydropteridine diphosphate and 4-aminobenzoate: step 2/2. It functions in the pathway cofactor biosynthesis; tetrahydrofolylpolyglutamate biosynthesis. Functionally, catalyzes the addition of a glutamate residue to dihydropteroate (7,8-dihydropteroate or H2Pte) to form dihydrofolate (7,8-dihydrofolate monoglutamate or H2Pte-Glu). Also catalyzes successive additions of L-glutamate to tetrahydrofolate, leading to folylpolyglutamate derivatives. In terms of biological role, is involved in the bioactivation of the antituberculous drug para-aminosalicylic acid (PAS). Is able to use hydroxy-dihydropteroate (H2PtePAS) as substrate, which is the product formed by the action of DHPS (FolP1) on PAS, leading to hydroxy-dihydrofolate (H2PtePAS-Glu). This compound inhibits dihydrofolate reductase DHFR (DfrA), the next enzyme in the folate pathway, and thus disrupts the folate-dependent metabolic pathways. In Mycobacterium tuberculosis (strain ATCC 25618 / H37Rv), this protein is Dihydrofolate synthase/folylpolyglutamate synthase.